The following is a 122-amino-acid chain: Large ribosomal subunit protein uL14 (122 aa).

It belongs to the universal ribosomal protein uL14 family. Part of the 50S ribosomal subunit. Forms a cluster with proteins L3 and L19. In the 70S ribosome, L14 and L19 interact and together make contacts with the 16S rRNA in bridges B5 and B8.

In terms of biological role, binds to 23S rRNA. Forms part of two intersubunit bridges in the 70S ribosome. In Marinobacter nauticus (strain ATCC 700491 / DSM 11845 / VT8) (Marinobacter aquaeolei), this protein is Large ribosomal subunit protein uL14.